A 409-amino-acid chain; its full sequence is Na(+)-translocating NADH-quinone reductase subunit F (409 aa).

The helical transmembrane segment at 5-25 (FIFGIIAFTALVLVLAVIILF) threads the bilayer. In terms of domain architecture, 2Fe-2S ferredoxin-type spans 34-128 (GDITISINDD…SMDVELPEEI (95 aa)). Positions 71, 77, 80, and 112 each coordinate [2Fe-2S] cluster. The FAD-binding FR-type domain maps to 131 to 271 (VKKWECTVIS…SGPFGEFFAK (141 aa)).

It belongs to the NqrF family. In terms of assembly, composed of six subunits; NqrA, NqrB, NqrC, NqrD, NqrE and NqrF. Requires [2Fe-2S] cluster as cofactor. FAD serves as cofactor.

Its subcellular location is the cell inner membrane. It catalyses the reaction a ubiquinone + n Na(+)(in) + NADH + H(+) = a ubiquinol + n Na(+)(out) + NAD(+). Functionally, NQR complex catalyzes the reduction of ubiquinone-1 to ubiquinol by two successive reactions, coupled with the transport of Na(+) ions from the cytoplasm to the periplasm. The first step is catalyzed by NqrF, which accepts electrons from NADH and reduces ubiquinone-1 to ubisemiquinone by a one-electron transfer pathway. This Haemophilus ducreyi (strain 35000HP / ATCC 700724) protein is Na(+)-translocating NADH-quinone reductase subunit F.